Here is a 219-residue protein sequence, read N- to C-terminus: UPF0073 inner membrane protein YqfA (219 aa).

At 1-23 (MVQKPLIKQGYSLAEEIANSVSH) the chain is on the cytoplasmic side. A helical transmembrane segment spans residues 24-44 (GIGLVFGIVGLVLLLVQAVDL). Over 45–53 (NASATAITS) the chain is Periplasmic. The chain crosses the membrane as a helical span at residues 54-74 (YSLYGGSMILLFLASTLYHAI). The Cytoplasmic segment spans residues 75 to 90 (PHQRAKMWLKKFDHCA). The chain crosses the membrane as a helical span at residues 91–111 (IYLLIAGTYTPFLLVGLDSPL). Residues 112-113 (AR) are Periplasmic-facing. Residues 114 to 134 (GLMIVIWSLALLGILFKLTIA) traverse the membrane as a helical segment. Over 135-138 (HRFK) the chain is Cytoplasmic. A helical transmembrane segment spans residues 139 to 159 (ILSLVTYLAMGWLSLVVIYEM). The Periplasmic segment spans residues 160 to 165 (AVKLAA). The helical transmembrane segment at 166 to 186 (GSVTLLAVGGVVYSLGVIFYV) threads the bilayer. The Cytoplasmic portion of the chain corresponds to 187–195 (CKRIPYNHA). The chain crosses the membrane as a helical span at residues 196–216 (IWHGFVLGGSVCHFLAIYLYI). The Periplasmic portion of the chain corresponds to 217 to 219 (GQA).

Belongs to the UPF0073 (Hly-III) family.

Its subcellular location is the cell inner membrane. This chain is UPF0073 inner membrane protein YqfA (yqfA), found in Escherichia coli O157:H7.